Here is a 502-residue protein sequence, read N- to C-terminus: MQIKTEEISQIIESQIQNYEQRVEMSETGTVLYVGDGIARVYGVRNAMAMELLEFPGGLMGMVLNLEEDNVGVALLGPDTDIKEGDPVKRTGKIFSVPVGDAVMGRVLNPLGQPIDGEGPVDSKEFRPVELKAPGIIARKSVHEPMPTGIKAIDAMTPIGRGQRELVIGDRQTGKTAVCIDAILAQKNTDIHCFYVAIGQKRSTVALVADTLKKHGAMEYTTIISATASEPAPLQFIAAYAGCAMAEYYRDSGKHALIVYDDLSKQATAYRQMSLLLRRPPGREAFPGDVFYLHSRLLERAAKVNDSLGAGSLTALPIIETQAGDVSAYIPTNVISITDGQVYLEPNLFNAGIRPAINVGLSVSRVGGAAQIKAMKQVAGTMRLDLAQYRELAAFAQFGSDLDKATQAKLNRGARLVELLKQPQYQPMPFNEQVASMYAATRGFMDDVPVASIRKFEAEYIEFLRDAKGDILKDLDEKKAIDNDIEGRMKAALEEFKKGFTA.

169 to 176 (GDRQTGKT) is a binding site for ATP.

This sequence belongs to the ATPase alpha/beta chains family. In terms of assembly, F-type ATPases have 2 components, CF(1) - the catalytic core - and CF(0) - the membrane proton channel. CF(1) has five subunits: alpha(3), beta(3), gamma(1), delta(1), epsilon(1). CF(0) has three main subunits: a(1), b(2) and c(9-12). The alpha and beta chains form an alternating ring which encloses part of the gamma chain. CF(1) is attached to CF(0) by a central stalk formed by the gamma and epsilon chains, while a peripheral stalk is formed by the delta and b chains.

The protein resides in the cell inner membrane. The catalysed reaction is ATP + H2O + 4 H(+)(in) = ADP + phosphate + 5 H(+)(out). Its function is as follows. Produces ATP from ADP in the presence of a proton gradient across the membrane. The alpha chain is a regulatory subunit. The chain is ATP synthase subunit alpha from Oleidesulfovibrio alaskensis (strain ATCC BAA-1058 / DSM 17464 / G20) (Desulfovibrio alaskensis).